Consider the following 302-residue polypeptide: Cyclopropane mycolic acid synthase 2 (302 aa).

S-adenosyl-L-methionine-binding positions include 41–42 (YS), 76–84 (LLDIGCGWG), 102–107 (TLSENQ), and 131–132 (WE). Residue C284 is part of the active site.

It belongs to the CFA/CMAS family. Homodimer.

It is found in the cytoplasm. The enzyme catalyses a 1-acyl-2-(9Z)-enoyl-sn-glycero-3-phospholipid + S-adenosyl-L-methionine = a 1-acyl-2-(9-cyclopronane)-acyl-sn-glycero-3-phospholipid + S-adenosyl-L-homocysteine + H(+). Its pathway is lipid metabolism; mycolic acid biosynthesis. Its function is as follows. Catalyzes the formation of trans cyclopropanated ketomycolate or methoxymycolate through the conversion of a double bond to a cyclopropane ring at the proximal position of an oxygenated mycolic acid via the transfer of a methylene group from S-adenosyl-L-methionine. In the absence of MmaA2, CmaA2 has a non-specific cis-cyclopropanating activity and is able to catalyze the conversion of a double bond to a cis cyclopropane ring at the distal position of an alpha mycolic acid. Cyclopropanated mycolic acids are key factors participating in cell envelope permeability, host immunomodulation and persistence. The protein is Cyclopropane mycolic acid synthase 2 (cmaA2) of Mycobacterium bovis (strain ATCC BAA-935 / AF2122/97).